Reading from the N-terminus, the 219-residue chain is MGQKVNPTGLRVGIIRDWEAKWYAEKDFAAYLKEDLQIRKFIEKRLVDASVSTVEIERAANRVNISIHTAKPGMVIGKGGSEVENLRKELNDLTGKRVHINIVEIKKPDLDAKLVGENIARQLEGRVAFRRAMRGTMQRTMRSGAKGIKTQVAGRLNGADMSRVESYAEGTVPLHTLRADIDYAWVEAHTTYGSLGVKTWIYRGEILPEKKQSNGQGGK.

Residues Ile-38–Lys-106 form the KH type-2 domain.

It belongs to the universal ribosomal protein uS3 family. In terms of assembly, part of the 30S ribosomal subunit. Forms a tight complex with proteins S10 and S14.

Functionally, binds the lower part of the 30S subunit head. Binds mRNA in the 70S ribosome, positioning it for translation. The polypeptide is Small ribosomal subunit protein uS3 (Levilactobacillus brevis (strain ATCC 367 / BCRC 12310 / CIP 105137 / JCM 1170 / LMG 11437 / NCIMB 947 / NCTC 947) (Lactobacillus brevis)).